A 415-amino-acid chain; its full sequence is Intron-encoded DNA endonuclease aI3 (415 aa).

Residues 1–81 form a COX1 exons 1 to 3 encoded region; that stretch reads MVQRWLYSTN…MPALIGGFGN (81 aa). Helical transmembrane passes span 16 to 36 and 57 to 77; these read VLYF…SLII and VLVV…ALIG. A COX1 intron 3 encoded region spans residues 82-415; sequence QKRYESNNNN…HLKNTYLENK (334 aa).

The protein in the C-terminal section; belongs to the LAGLIDADG endonuclease family. The cofactor is Mg(2+). In terms of processing, the mature protein may arise from proteolytic cleavage of an in-frame translation of some COX1 exons plus the intron containing the aI3 open reading frame.

The protein localises to the mitochondrion. It localises to the membrane. Functionally, mitochondrial DNA endonuclease involved in intron homing. It introduces a specific double-strand break in the DNA of the COX1 gene and thus mediates the insertion of an intron, containing its own coding sequence (group I intron), into an intronless gene. Recognizes with high specificity and cleaves the sequence 5'-GGTTTTGGTAACTATTTATTAC-3'. This is Intron-encoded DNA endonuclease aI3 (AI3) from Saccharomyces cerevisiae (strain ATCC 204508 / S288c) (Baker's yeast).